We begin with the raw amino-acid sequence, 77 residues long: Conotoxin ArMKLT2-022 (77 aa).

The first 22 residues, 1–22 (MKLTCVLIVAVLFLTACQLIAA), serve as a signal peptide directing secretion. The propeptide occupies 23-46 (DDSRDLKRFSRRKMRDGMLNTKNT). Gln49 carries the post-translational modification Pyrrolidone carboxylic acid. 3 cysteine pairs are disulfide-bonded: Cys50/Cys65, Cys57/Cys68, and Cys64/Cys73.

This sequence belongs to the conotoxin O1 superfamily. Expressed by the venom duct.

It is found in the secreted. The protein is Conotoxin ArMKLT2-022 of Conus arenatus (Sand-dusted cone).